The sequence spans 444 residues: Pentatricopeptide repeat-containing protein At4g35850, mitochondrial (444 aa).

A mitochondrion-targeting transit peptide spans 1–25 (MKFLMQSISGRNRSLVRALVSRRYF). PPR repeat units lie at residues 40-74 (DLSEYNTAVNSVTAQRRHYLLRDVYDDMKLDGVQP), 75-109 (TADIFHSFVVGTMKGARLSDAFFFREEMKAMGIAP), 110-144 (DVNLYNFLISTCGKCKNGKEAIRVYDEMKRYDVKP), 145-179 (NGQTFVCLLNACAVSGQLDLVYAIVRDMTAAGVGL), 255-289 (NLTVYHVAFSALADLKDVKATEALLEMLKKDGKDT), and 290-325 (DTYCMLQIMRCYLHSQDFENGLKLFQDYMSADKIPA).

The protein belongs to the PPR family. P subfamily.

The protein localises to the mitochondrion. The polypeptide is Pentatricopeptide repeat-containing protein At4g35850, mitochondrial (Arabidopsis thaliana (Mouse-ear cress)).